The sequence spans 359 residues: MGISCSHLEETMSKPPDCLLRMLRGTPRQRVFTFFIISFKFMFLISILIYWHTVGAPKDQREYSLPVDFSCPQLAFPRVSAPGNIFFLETSDRTSPNFLFMCSVESAARAHPESQVVVLMKGLPRDTTAQPRNLGISLLSCFPNVWIRPLDLQELFEDTPLAAWYSEARHRWEPYQLPVLSDASRIALLWKFGGIYLDTDFIVLKNLLNLTNTLGIQSRYVLNGAFLAFERKHEFLALCLHDFVANYNGWIWGHQGPQLLTRVFKKWCSIQSLEKSHACRGVTALPPEAFYPIPWQNWKKYFEDISPEELTQLLNATYAVHVWNKKSQGTHLEATSKALLAQLHARYCPTTHRAMKMYL.

At methionine 1 to arginine 30 the chain is on the cytoplasmic side. The chain crosses the membrane as a helical; Signal-anchor for type II membrane protein span at residues valine 31–tryptophan 51. The Lumenal portion of the chain corresponds to histidine 52–leucine 359. Residues aspartate 198–aspartate 200 carry the DXD motif motif. N-linked (GlcNAc...) asparagine glycans are attached at residues asparagine 209 and asparagine 315.

It belongs to the glycosyltransferase 32 family.

It localises to the golgi apparatus membrane. It carries out the reaction a beta-D-Gal-(1-&gt;4)-beta-D-Glc-(1&lt;-&gt;1)-Cer(d18:1(4E)) + UDP-alpha-D-galactose = a globoside Gb3Cer (d18:1(4E)) + UDP + H(+). It catalyses the reaction a beta-D-Gal-(1&lt;-&gt;1')-ceramide + UDP-alpha-D-galactose = alpha-D-Gal-(1-&gt;4)-beta-D-Gal-(1&lt;-&gt;1')-Cer + UDP + H(+). The protein operates within glycolipid biosynthesis. Catalyzes the transfer of galactose from UDP-alpha-D-galactose to lactosylceramide/beta-D-galactosyl-(1-&gt;4)-beta-D-glucosyl-(1&lt;-&gt;1)-ceramide(d18:1(4E)) to produce globotriaosylceramide/globoside Gb3Cer (d18:1(4E)). Also able to transfer galactose to galactosylceramide/beta-D-Gal-(1&lt;-&gt;1')-Cer. Globoside Gb3Cer is a glycosphingolipid of the globo serie, one of the major types of neutral root structures of glycosphingolipids, that constitute a significant portion of mammalian cell membranes. This Mus musculus (Mouse) protein is Lactosylceramide 4-alpha-galactosyltransferase.